The sequence spans 342 residues: Ketol-acid reductoisomerase (NADP(+)) (342 aa).

One can recognise a KARI N-terminal Rossmann domain in the interval 2–181 (VKVYYNGDIK…GGARAGVLET (180 aa)). NADP(+)-binding positions include 25-28 (YGSQ), Arg48, Ser52, and 82-85 (DEQQ). The active site involves His107. Gly133 is a binding site for NADP(+). The 146-residue stretch at 182–327 (TFKEETETDL…RKLREMMPFV (146 aa)) folds into the KARI C-terminal knotted domain. Mg(2+) is bound by residues Asp190, Glu194, Glu226, and Glu230. Residue Ser251 coordinates substrate.

The protein belongs to the ketol-acid reductoisomerase family. Mg(2+) serves as cofactor.

The enzyme catalyses (2R)-2,3-dihydroxy-3-methylbutanoate + NADP(+) = (2S)-2-acetolactate + NADPH + H(+). The catalysed reaction is (2R,3R)-2,3-dihydroxy-3-methylpentanoate + NADP(+) = (S)-2-ethyl-2-hydroxy-3-oxobutanoate + NADPH + H(+). It functions in the pathway amino-acid biosynthesis; L-isoleucine biosynthesis; L-isoleucine from 2-oxobutanoate: step 2/4. Its pathway is amino-acid biosynthesis; L-valine biosynthesis; L-valine from pyruvate: step 2/4. Functionally, involved in the biosynthesis of branched-chain amino acids (BCAA). Catalyzes an alkyl-migration followed by a ketol-acid reduction of (S)-2-acetolactate (S2AL) to yield (R)-2,3-dihydroxy-isovalerate. In the isomerase reaction, S2AL is rearranged via a Mg-dependent methyl migration to produce 3-hydroxy-3-methyl-2-ketobutyrate (HMKB). In the reductase reaction, this 2-ketoacid undergoes a metal-dependent reduction by NADPH to yield (R)-2,3-dihydroxy-isovalerate. The chain is Ketol-acid reductoisomerase (NADP(+)) from Bacillus licheniformis (strain ATCC 14580 / DSM 13 / JCM 2505 / CCUG 7422 / NBRC 12200 / NCIMB 9375 / NCTC 10341 / NRRL NRS-1264 / Gibson 46).